Consider the following 324-residue polypeptide: Glycerol-3-phosphate dehydrogenase [NAD(P)+] (324 aa).

Positions 15, 35, and 101 each coordinate NADPH. Residues Lys-101 and Gly-129 each contribute to the sn-glycerol 3-phosphate site. Ala-133 serves as a coordination point for NADPH. Sn-glycerol 3-phosphate-binding residues include Lys-184, Asp-237, Ser-247, Arg-248, and Asn-249. The active-site Proton acceptor is Lys-184. Arg-248 contributes to the NADPH binding site. Val-272 and Glu-274 together coordinate NADPH.

It belongs to the NAD-dependent glycerol-3-phosphate dehydrogenase family.

It localises to the cytoplasm. It carries out the reaction sn-glycerol 3-phosphate + NAD(+) = dihydroxyacetone phosphate + NADH + H(+). It catalyses the reaction sn-glycerol 3-phosphate + NADP(+) = dihydroxyacetone phosphate + NADPH + H(+). The protein operates within membrane lipid metabolism; glycerophospholipid metabolism. Functionally, catalyzes the reduction of the glycolytic intermediate dihydroxyacetone phosphate (DHAP) to sn-glycerol 3-phosphate (G3P), the key precursor for phospholipid synthesis. This is Glycerol-3-phosphate dehydrogenase [NAD(P)+] from Gluconobacter oxydans (strain 621H) (Gluconobacter suboxydans).